Consider the following 367-residue polypeptide: Anhydro-N-acetylmuramic acid kinase (367 aa).

13-20 contributes to the ATP binding site; that stretch reads GTSMDGAD.

This sequence belongs to the anhydro-N-acetylmuramic acid kinase family.

It catalyses the reaction 1,6-anhydro-N-acetyl-beta-muramate + ATP + H2O = N-acetyl-D-muramate 6-phosphate + ADP + H(+). The protein operates within amino-sugar metabolism; 1,6-anhydro-N-acetylmuramate degradation. It participates in cell wall biogenesis; peptidoglycan recycling. In terms of biological role, catalyzes the specific phosphorylation of 1,6-anhydro-N-acetylmuramic acid (anhMurNAc) with the simultaneous cleavage of the 1,6-anhydro ring, generating MurNAc-6-P. Is required for the utilization of anhMurNAc either imported from the medium or derived from its own cell wall murein, and thus plays a role in cell wall recycling. The sequence is that of Anhydro-N-acetylmuramic acid kinase from Neisseria gonorrhoeae (strain ATCC 700825 / FA 1090).